Reading from the N-terminus, the 273-residue chain is MSTIRPVFYVSDGTGITAETIGHSLLTQFSGFTFVTERMVFIDDAEKARDASQRILAASERYRVRPIVVNSCVNPYLSVILAESGALMLDVFAPFIGLLEHELNTSRHSRVGRAHGMVDFETYHRRINAMNFALAHDDGVAASYDEAEVVLVAVSRAGKTPTCIYLALHYGIRAANYPLIDEDLNSDQLPLRLRPYRKKLFGLTINPERLQQIRQERRPNSRYAALDTCKREVAAAERMFSAERITTLSTTHTSIEEISSKVLVTLGLQREMF.

Residue 153 to 160 (AVSRAGKT) participates in ADP binding.

Belongs to the pyruvate, phosphate/water dikinase regulatory protein family. PSRP subfamily.

It catalyses the reaction [pyruvate, water dikinase] + ADP = [pyruvate, water dikinase]-phosphate + AMP + H(+). The enzyme catalyses [pyruvate, water dikinase]-phosphate + phosphate + H(+) = [pyruvate, water dikinase] + diphosphate. Functionally, bifunctional serine/threonine kinase and phosphorylase involved in the regulation of the phosphoenolpyruvate synthase (PEPS) by catalyzing its phosphorylation/dephosphorylation. The sequence is that of Putative phosphoenolpyruvate synthase regulatory protein from Xylella fastidiosa (strain M12).